Here is a 1375-residue protein sequence, read N- to C-terminus: DNA-directed RNA polymerase subunit beta' (1375 aa).

4 residues coordinate Zn(2+): C70, C72, C85, and C88. The Mg(2+) site is built by D460, D462, and D464. 4 residues coordinate Zn(2+): C800, C874, C881, and C884.

Belongs to the RNA polymerase beta' chain family. As to quaternary structure, the RNAP catalytic core consists of 2 alpha, 1 beta, 1 beta' and 1 omega subunit. When a sigma factor is associated with the core the holoenzyme is formed, which can initiate transcription. Mg(2+) serves as cofactor. It depends on Zn(2+) as a cofactor.

The enzyme catalyses RNA(n) + a ribonucleoside 5'-triphosphate = RNA(n+1) + diphosphate. DNA-dependent RNA polymerase catalyzes the transcription of DNA into RNA using the four ribonucleoside triphosphates as substrates. This chain is DNA-directed RNA polymerase subunit beta', found in Bdellovibrio bacteriovorus (strain ATCC 15356 / DSM 50701 / NCIMB 9529 / HD100).